A 174-amino-acid polypeptide reads, in one-letter code: UPF0340 protein SAHV_2098 (174 aa).

Belongs to the UPF0340 family.

The chain is UPF0340 protein SAHV_2098 from Staphylococcus aureus (strain Mu3 / ATCC 700698).